The primary structure comprises 855 residues: Glucans biosynthesis glucosyltransferase H (855 aa).

6 helical membrane-spanning segments follow: residues 142-162, 196-216, 515-535, 572-592, 606-626, and 682-702; these read ILLTLMIGQTLVAGWYMKGIL, ILVLFGILFCWVSAGFWTALM, VFLTGVMSYLSAPLWFLFLVL, LFSTTIVLLFLPKLLSVILIW, TLSMLLEMLFSMLLAPVRMIF, and FLWWLAPIVGSLVLSIPVSVI.

It belongs to the glycosyltransferase 2 family. OpgH subfamily.

The protein resides in the cell inner membrane. The protein operates within glycan metabolism; osmoregulated periplasmic glucan (OPG) biosynthesis. Involved in the biosynthesis of osmoregulated periplasmic glucans (OPGs). The sequence is that of Glucans biosynthesis glucosyltransferase H from Pseudomonas entomophila (strain L48).